The primary structure comprises 690 residues: BURP domain-containing protein 14 (690 aa).

The signal sequence occupies residues 1 to 26; sequence MAPPRHARLVAATIAVLLCHLPRSAA. The disordered stretch occupies residues 134-163; the sequence is GSSWSKSSSDGDGAAAAAAPAGGGGGGGGG. Residues 135 to 153 are compositionally biased toward low complexity; it reads SSWSKSSSDGDGAAAAAAP. The span at 154–163 shows a compositional bias: gly residues; the sequence is AGGGGGGGGG. An N-linked (GlcNAc...) asparagine glycan is attached at N178. Residues 201-211 show a composition bias toward gly residues; that stretch reads SNGGGGGGGGV. A disordered region spans residues 201–232; sequence SNGGGGGGGGVDSFRRYGKGSQGRNDSFTSYE. N-linked (GlcNAc...) asparagine glycosylation is found at N225, N317, N379, N432, N450, and N601. The BURP domain occupies 477–689; it reads FFRERDLVAG…FQGDMTWTVA (213 aa).

As to expression, expressed in panicles.

The chain is BURP domain-containing protein 14 (BURP14) from Oryza sativa subsp. japonica (Rice).